The sequence spans 205 residues: Holliday junction branch migration complex subunit RuvA (205 aa).

The domain I stretch occupies residues 1 to 64 (MIGKLKGVVD…EDQIRLFGFS (64 aa)). A domain II region spans residues 65 to 143 (SAAERDWFRL…GFSASEPLAA (79 aa)). Residues 144-152 (QLGGGGVAS) form a flexible linker region. The segment at 153 to 205 (AQGGAAADAVSALVNLGYGVPQANAAIAAALRGAGEGAKTEVLIRLGLKELAK) is domain III.

The protein belongs to the RuvA family. As to quaternary structure, homotetramer. Forms an RuvA(8)-RuvB(12)-Holliday junction (HJ) complex. HJ DNA is sandwiched between 2 RuvA tetramers; dsDNA enters through RuvA and exits via RuvB. An RuvB hexamer assembles on each DNA strand where it exits the tetramer. Each RuvB hexamer is contacted by two RuvA subunits (via domain III) on 2 adjacent RuvB subunits; this complex drives branch migration. In the full resolvosome a probable DNA-RuvA(4)-RuvB(12)-RuvC(2) complex forms which resolves the HJ.

Its subcellular location is the cytoplasm. The RuvA-RuvB-RuvC complex processes Holliday junction (HJ) DNA during genetic recombination and DNA repair, while the RuvA-RuvB complex plays an important role in the rescue of blocked DNA replication forks via replication fork reversal (RFR). RuvA specifically binds to HJ cruciform DNA, conferring on it an open structure. The RuvB hexamer acts as an ATP-dependent pump, pulling dsDNA into and through the RuvAB complex. HJ branch migration allows RuvC to scan DNA until it finds its consensus sequence, where it cleaves and resolves the cruciform DNA. The chain is Holliday junction branch migration complex subunit RuvA from Xanthobacter autotrophicus (strain ATCC BAA-1158 / Py2).